Here is a 563-residue protein sequence, read N- to C-terminus: Testis-expressed basic protein 1 (563 aa).

Residues 3-23 (VLEITLAVILTLLGLAILAIL) traverse the membrane as a helical segment. The disordered stretch occupies residues 56-81 (GSRHAYSTQSDTSYDNRERSKRDYTP). The span at 69-79 (YDNRERSKRDY) shows a compositional bias: basic and acidic residues. Residues 99–119 (ELILLLMCFILALSRSSIGSI) traverse the membrane as a helical segment. The interval 311–563 (SEMSIPQGQG…GRKYNKKVEE (253 aa)) is disordered. The segment covering 367–383 (QVEKSEMGVPRRQESQV) has biased composition (basic and acidic residues). Positions 384-395 (KKSQSGVSKGQE) are enriched in low complexity. Basic and acidic residues-rich tracts occupy residues 412-447 (QVEK…KKSE) and 485-544 (EAQE…EKSK).

It is found in the membrane. The protein is Testis-expressed basic protein 1 of Homo sapiens (Human).